The chain runs to 255 residues: Homeobox-leucine zipper protein ATHB-23 (255 aa).

Residues 68 to 127 (MGEKKRRLNMEQLKALEKDFELGNKLESDRKLELARALGLQPRQIAIWFQNRRARSKTKQ) constitute a DNA-binding region (homeobox). The leucine-zipper stretch occupies residues 128 to 163 (LEKDYDMLKRQFESLRDENEVLQTQNQKLQAQVMAL).

This sequence belongs to the HD-ZIP homeobox family. Class I subfamily. Expressed in young leaves, in the adaxial domain of leaf primordia and the rib meristem. Expressed in the styles of flowers and siliques.

It is found in the nucleus. Its function is as follows. Probable transcription factor. The protein is Homeobox-leucine zipper protein ATHB-23 (ATHB-23) of Arabidopsis thaliana (Mouse-ear cress).